The primary structure comprises 486 residues: Zinc metalloproteinase-disintegrin VMP-II (486 aa).

The signal sequence occupies residues 1 to 20 (MIQVLLVTICLAVFPYQGSS). The propeptide occupies 21 to 190 (IILESGNVND…KASQSNLPPE (170 aa)). At Gln-191 the chain carries Pyrrolidone carboxylic acid. The 198-residue stretch at 197 to 394 (RYIELVVVAD…HYTTCLYNEP (198 aa)) folds into the Peptidase M12B domain. Residues Glu-200 and Asp-284 each coordinate Ca(2+). Disulfide bonds link Cys-308/Cys-389, Cys-348/Cys-372, and Cys-350/Cys-355. Residue His-333 participates in Zn(2+) binding. Glu-334 is a catalytic residue. Positions 337 and 343 each coordinate Zn(2+). Cys-389 and Asn-392 together coordinate Ca(2+). Positions 402-486 (PPVCGNYYTE…AECPNKGYYG (85 aa)) constitute a Disintegrin domain. Disulfide bonds link Cys-405-Cys-424, Cys-416-Cys-434, Cys-418-Cys-429, Cys-428-Cys-451, Cys-442-Cys-448, Cys-447-Cys-472, and Cys-460-Cys-479. Residues 464–466 (RGD) carry the Cell attachment site motif.

Belongs to the venom metalloproteinase (M12B) family. P-II subfamily. P-IIb sub-subfamily. In terms of assembly, monomer. Zn(2+) is required as a cofactor. In terms of tissue distribution, expressed by the venom gland.

The protein resides in the secreted. Snake venom zinc metalloproteinase that inhibits ADP-induced platelet aggregation (probably by binding integrin alpha-IIb/beta-3 (ITGA2B/ITGB3)) and degrades fibrinogen. This Crotalus atrox (Western diamondback rattlesnake) protein is Zinc metalloproteinase-disintegrin VMP-II.